Consider the following 310-residue polypeptide: 4-hydroxy-3-methylbut-2-enyl diphosphate reductase (310 aa).

C13 provides a ligand contact to [4Fe-4S] cluster. H42 and H75 together coordinate (2E)-4-hydroxy-3-methylbut-2-enyl diphosphate. H42 and H75 together coordinate dimethylallyl diphosphate. 2 residues coordinate isopentenyl diphosphate: H42 and H75. C97 serves as a coordination point for [4Fe-4S] cluster. A (2E)-4-hydroxy-3-methylbut-2-enyl diphosphate-binding site is contributed by H125. H125 contributes to the dimethylallyl diphosphate binding site. Residue H125 coordinates isopentenyl diphosphate. Catalysis depends on E127, which acts as the Proton donor. T165 contacts (2E)-4-hydroxy-3-methylbut-2-enyl diphosphate. [4Fe-4S] cluster is bound at residue C195. 4 residues coordinate (2E)-4-hydroxy-3-methylbut-2-enyl diphosphate: S223, S224, N225, and S267. S223, S224, N225, and S267 together coordinate dimethylallyl diphosphate. Residues S223, S224, N225, and S267 each coordinate isopentenyl diphosphate.

This sequence belongs to the IspH family. The cofactor is [4Fe-4S] cluster.

It catalyses the reaction isopentenyl diphosphate + 2 oxidized [2Fe-2S]-[ferredoxin] + H2O = (2E)-4-hydroxy-3-methylbut-2-enyl diphosphate + 2 reduced [2Fe-2S]-[ferredoxin] + 2 H(+). The enzyme catalyses dimethylallyl diphosphate + 2 oxidized [2Fe-2S]-[ferredoxin] + H2O = (2E)-4-hydroxy-3-methylbut-2-enyl diphosphate + 2 reduced [2Fe-2S]-[ferredoxin] + 2 H(+). Its pathway is isoprenoid biosynthesis; dimethylallyl diphosphate biosynthesis; dimethylallyl diphosphate from (2E)-4-hydroxy-3-methylbutenyl diphosphate: step 1/1. The protein operates within isoprenoid biosynthesis; isopentenyl diphosphate biosynthesis via DXP pathway; isopentenyl diphosphate from 1-deoxy-D-xylulose 5-phosphate: step 6/6. Catalyzes the conversion of 1-hydroxy-2-methyl-2-(E)-butenyl 4-diphosphate (HMBPP) into a mixture of isopentenyl diphosphate (IPP) and dimethylallyl diphosphate (DMAPP). Acts in the terminal step of the DOXP/MEP pathway for isoprenoid precursor biosynthesis. This chain is 4-hydroxy-3-methylbut-2-enyl diphosphate reductase, found in Chlamydia pneumoniae (Chlamydophila pneumoniae).